The chain runs to 145 residues: Putative pre-16S rRNA nuclease (145 aa).

The protein belongs to the YqgF nuclease family.

It is found in the cytoplasm. Functionally, could be a nuclease involved in processing of the 5'-end of pre-16S rRNA. This is Putative pre-16S rRNA nuclease from Pseudomonas fluorescens (strain SBW25).